Here is a 197-residue protein sequence, read N- to C-terminus: Signal-regulatory protein delta (197 aa).

An N-terminal signal peptide occupies residues 1 to 29 (MPIPASPLHPPLPSLLLYLLLELAGVTHV). In terms of domain architecture, Ig-like V-type spans 31-135 (HVQQTEMSQT…IKEYQSGRGT (105 aa)). Cysteine 51 and cysteine 117 are joined by a disulfide. The interval 139–158 (VTEQNPRPPKNRPAGRAGSR) is disordered. An N-linked (GlcNAc...) asparagine glycan is attached at asparagine 174.

The protein localises to the secreted. The sequence is that of Signal-regulatory protein delta (SIRPD) from Homo sapiens (Human).